A 124-amino-acid polypeptide reads, in one-letter code: Large ribosomal subunit protein eL31 (124 aa).

Belongs to the eukaryotic ribosomal protein eL31 family. In terms of assembly, component of the large ribosomal subunit.

The protein resides in the cytoplasm. In terms of biological role, component of the large ribosomal subunit. The ribosome is a large ribonucleoprotein complex responsible for the synthesis of proteins in the cell. This Paralichthys olivaceus (Bastard halibut) protein is Large ribosomal subunit protein eL31 (rpl31).